Reading from the N-terminus, the 466-residue chain is Dihydrolipoyl dehydrogenase (466 aa).

FAD contacts are provided by residues 34–42 (ERVHLGGIC), lysine 51, and glycine 114. Residues cysteine 42 and cysteine 47 are joined by a disulfide bond. NAD(+) is bound by residues 180–184 (GSGAI), glutamate 203, and 269–272 (AIGV). Residues aspartate 311 and alanine 319 each contribute to the FAD site. Histidine 445 serves as the catalytic Proton acceptor.

The protein belongs to the class-I pyridine nucleotide-disulfide oxidoreductase family. As to quaternary structure, homodimer. Requires FAD as cofactor.

Its subcellular location is the cytoplasm. The catalysed reaction is N(6)-[(R)-dihydrolipoyl]-L-lysyl-[protein] + NAD(+) = N(6)-[(R)-lipoyl]-L-lysyl-[protein] + NADH + H(+). In terms of biological role, lipoamide dehydrogenase is a component of the alpha-ketoacid dehydrogenase complexes. The protein is Dihydrolipoyl dehydrogenase (lpd) of Zymomonas mobilis subsp. mobilis (strain ATCC 31821 / ZM4 / CP4).